A 173-amino-acid polypeptide reads, in one-letter code: uncharacterized protein (173 aa).

This is an uncharacterized protein from Rhodospirillum rubrum.